The primary structure comprises 256 residues: Ubiquinone/menaquinone biosynthesis C-methyltransferase UbiE (256 aa).

Residues Thr79, Asp100, and 128–129 each bind S-adenosyl-L-methionine; that span reads DA.

This sequence belongs to the class I-like SAM-binding methyltransferase superfamily. MenG/UbiE family.

The enzyme catalyses a 2-demethylmenaquinol + S-adenosyl-L-methionine = a menaquinol + S-adenosyl-L-homocysteine + H(+). It carries out the reaction a 2-methoxy-6-(all-trans-polyprenyl)benzene-1,4-diol + S-adenosyl-L-methionine = a 5-methoxy-2-methyl-3-(all-trans-polyprenyl)benzene-1,4-diol + S-adenosyl-L-homocysteine + H(+). The protein operates within quinol/quinone metabolism; menaquinone biosynthesis; menaquinol from 1,4-dihydroxy-2-naphthoate: step 2/2. Its pathway is cofactor biosynthesis; ubiquinone biosynthesis. Its function is as follows. Methyltransferase required for the conversion of demethylmenaquinol (DMKH2) to menaquinol (MKH2) and the conversion of 2-polyprenyl-6-methoxy-1,4-benzoquinol (DDMQH2) to 2-polyprenyl-3-methyl-6-methoxy-1,4-benzoquinol (DMQH2). This Pseudomonas paraeruginosa (strain DSM 24068 / PA7) (Pseudomonas aeruginosa (strain PA7)) protein is Ubiquinone/menaquinone biosynthesis C-methyltransferase UbiE.